We begin with the raw amino-acid sequence, 298 residues long: Protoheme IX farnesyltransferase (298 aa).

The next 9 helical transmembrane spans lie at Val-19–Asn-39, Pro-40–Leu-60, Leu-91–Trp-111, Phe-112–Leu-132, Ile-140–Gly-160, Leu-167–Phe-187, Ile-213–Gly-233, Leu-236–Leu-256, and Leu-277–Gly-297.

It belongs to the UbiA prenyltransferase family. Protoheme IX farnesyltransferase subfamily. As to quaternary structure, interacts with CtaA.

The protein localises to the cell inner membrane. The enzyme catalyses heme b + (2E,6E)-farnesyl diphosphate + H2O = Fe(II)-heme o + diphosphate. The protein operates within porphyrin-containing compound metabolism; heme O biosynthesis; heme O from protoheme: step 1/1. Its function is as follows. Converts heme B (protoheme IX) to heme O by substitution of the vinyl group on carbon 2 of heme B porphyrin ring with a hydroxyethyl farnesyl side group. This is Protoheme IX farnesyltransferase from Paracoccus denitrificans.